We begin with the raw amino-acid sequence, 61 residues long: MAKLAVTLTRSMIGRPENQRVTTRTLGLRKMHQTVVVPDNAAMRGMINHVSHLLTVKEIQE.

The protein belongs to the universal ribosomal protein uL30 family. Part of the 50S ribosomal subunit.

This is Large ribosomal subunit protein uL30 from Exiguobacterium sibiricum (strain DSM 17290 / CCUG 55495 / CIP 109462 / JCM 13490 / 255-15).